Here is a 775-residue protein sequence, read N- to C-terminus: Probable ubiquitin carboxyl-terminal hydrolase creB (775 aa).

The disordered stretch occupies residues 1-45; sequence MGSFLRSFRHNGGSTAPSVGAVPAKKEPQPPPMTPLEKRLLDMGP. The segment covering 36–45 has biased composition (basic and acidic residues); that stretch reads LEKRLLDMGP. Positions 55–468 constitute a USP domain; sequence YGMENYGNTC…CAYVLFYQET (414 aa). Cys-64 acts as the Nucleophile in catalysis. Disordered regions lie at residues 113–146 and 238–269; these read EAEA…DSPE and ASKQ…KTPN. Residues 256–269 show a composition bias toward polar residues; sequence SVDQSSSTGSKTPN. The Proton acceptor role is filled by His-419. A disordered region spans residues 496–775; it reads LKQNGFPQSP…LRKKSFSILS (280 aa). 2 stretches are compositionally biased toward low complexity: residues 546-566 and 576-585; these read ESAP…SPLS and ERVTTVATPP. A coiled-coil region spans residues 586 to 653; the sequence is KNDALAKKER…ASKAEEDRRL (68 aa). The span at 589–662 shows a compositional bias: basic and acidic residues; that stretch reads ALAKKERARE…LSHENGKEKQ (74 aa). Residues 668-679 show a composition bias toward basic residues; the sequence is RLKRGSKSLSHR. The segment covering 705-725 has biased composition (low complexity); sequence SQTGPTSEQQQQQQQQQSPPN. Positions 739 to 757 are enriched in basic and acidic residues; it reads TIREDEQVNHKDSKHERTG. The span at 758–775 shows a compositional bias: basic residues; sequence HGKWRSFSLRKKSFSILS.

The protein belongs to the peptidase C19 family. Interacts with creA, creC and qutD.

The catalysed reaction is Thiol-dependent hydrolysis of ester, thioester, amide, peptide and isopeptide bonds formed by the C-terminal Gly of ubiquitin (a 76-residue protein attached to proteins as an intracellular targeting signal).. Its function is as follows. Ubiquitin thioesterase component of the regulatory network controlling carbon source utilization through ubiquitination and deubiquitination involving creA, creB, creC, creD and acrB. Deubiquitinates the creA catabolic repressor and the quinate permease qutD. Also plays a role in response to carbon starvation and the control of extracellular proteases activity. The chain is Probable ubiquitin carboxyl-terminal hydrolase creB (creB) from Aspergillus fumigatus (strain ATCC MYA-4609 / CBS 101355 / FGSC A1100 / Af293) (Neosartorya fumigata).